The sequence spans 341 residues: ATPase GET3 (341 aa).

34–41 (KGGVGKTT) contributes to the ATP binding site. Asp63 is an active-site residue. 2 residues coordinate ATP: Glu245 and Asn272. Residues Cys283 and Cys286 each contribute to the Zn(2+) site.

The protein belongs to the arsA ATPase family. Homodimer.

It is found in the cytoplasm. The protein localises to the endoplasmic reticulum. In terms of biological role, ATPase required for the post-translational delivery of tail-anchored (TA) proteins to the endoplasmic reticulum. Recognizes and selectively binds the transmembrane domain of TA proteins in the cytosol. This complex then targets to the endoplasmic reticulum by membrane-bound receptors, where the tail-anchored protein is released for insertion. This process is regulated by ATP binding and hydrolysis. ATP binding drives the homodimer towards the closed dimer state, facilitating recognition of newly synthesized TA membrane proteins. ATP hydrolysis is required for insertion. Subsequently, the homodimer reverts towards the open dimer state, lowering its affinity for the membrane-bound receptor, and returning it to the cytosol to initiate a new round of targeting. The sequence is that of ATPase GET3 from Ajellomyces capsulatus (strain G186AR / H82 / ATCC MYA-2454 / RMSCC 2432) (Darling's disease fungus).